Here is a 309-residue protein sequence, read N- to C-terminus: Methionyl-tRNA formyltransferase (309 aa).

110-113 (SLLP) contacts (6S)-5,6,7,8-tetrahydrofolate. The interval 289–309 (KRMAATDWARGSRIEQGERLK) is disordered. The segment covering 298–309 (RGSRIEQGERLK) has biased composition (basic and acidic residues).

It belongs to the Fmt family.

The enzyme catalyses L-methionyl-tRNA(fMet) + (6R)-10-formyltetrahydrofolate = N-formyl-L-methionyl-tRNA(fMet) + (6S)-5,6,7,8-tetrahydrofolate + H(+). Functionally, attaches a formyl group to the free amino group of methionyl-tRNA(fMet). The formyl group appears to play a dual role in the initiator identity of N-formylmethionyl-tRNA by promoting its recognition by IF2 and preventing the misappropriation of this tRNA by the elongation apparatus. In Saccharopolyspora erythraea (strain ATCC 11635 / DSM 40517 / JCM 4748 / NBRC 13426 / NCIMB 8594 / NRRL 2338), this protein is Methionyl-tRNA formyltransferase.